A 184-amino-acid polypeptide reads, in one-letter code: Shikimate kinase (184 aa).

Ser17–Ser22 is an ATP binding site. Thr21 contributes to the Mg(2+) binding site. 2 residues coordinate substrate: Asp39 and Gly85.

It belongs to the shikimate kinase family. As to quaternary structure, monomer. The cofactor is Mg(2+).

It is found in the cytoplasm. The enzyme catalyses shikimate + ATP = 3-phosphoshikimate + ADP + H(+). Its pathway is metabolic intermediate biosynthesis; chorismate biosynthesis; chorismate from D-erythrose 4-phosphate and phosphoenolpyruvate: step 5/7. In terms of biological role, catalyzes the specific phosphorylation of the 3-hydroxyl group of shikimic acid using ATP as a cosubstrate. This chain is Shikimate kinase, found in Chlamydia muridarum (strain MoPn / Nigg).